We begin with the raw amino-acid sequence, 93 residues long: Small ribosomal subunit protein uS15 (93 aa).

The protein belongs to the universal ribosomal protein uS15 family. Part of the 30S ribosomal subunit. Forms a bridge to the 50S subunit in the 70S ribosome, contacting the 23S rRNA.

One of the primary rRNA binding proteins, it binds directly to 16S rRNA where it helps nucleate assembly of the platform of the 30S subunit by binding and bridging several RNA helices of the 16S rRNA. Its function is as follows. Forms an intersubunit bridge (bridge B4) with the 23S rRNA of the 50S subunit in the ribosome. This chain is Small ribosomal subunit protein uS15, found in Anaplasma phagocytophilum (strain HZ).